A 247-amino-acid polypeptide reads, in one-letter code: MQYNFKVEAFEGPLDLLLHLIHRYEIDIYNIPVAEITEQYLSYVHTMKELQLDVASEYLVMAATLLQIKSKMLLPKHEEDVLDNGDDFIDDPRQELMERLIEYKKYKQVATELKEREQERAQLYTRPPIDFTSLQQEEETNLPLDVTLYDMLAAFQKLMRRKKAKKPVTTRITRQEIPIEQRMTDILKQLEIQGGRQSFYDLFVDDEREIMVVTFLAVLELMKNQQIIIEQEHNFDEIFVSSYTKSA.

The protein belongs to the ScpA family. As to quaternary structure, component of a cohesin-like complex composed of ScpA, ScpB and the Smc homodimer, in which ScpA and ScpB bind to the head domain of Smc. The presence of the three proteins is required for the association of the complex with DNA.

Its subcellular location is the cytoplasm. Participates in chromosomal partition during cell division. May act via the formation of a condensin-like complex containing Smc and ScpB that pull DNA away from mid-cell into both cell halves. The polypeptide is Segregation and condensation protein A (Bacillus cereus (strain 03BB102)).